The chain runs to 178 residues: Large ribosomal subunit protein uL6 (178 aa).

The protein belongs to the universal ribosomal protein uL6 family. In terms of assembly, part of the 50S ribosomal subunit.

Functionally, this protein binds to the 23S rRNA, and is important in its secondary structure. It is located near the subunit interface in the base of the L7/L12 stalk, and near the tRNA binding site of the peptidyltransferase center. This chain is Large ribosomal subunit protein uL6, found in Streptococcus uberis (strain ATCC BAA-854 / 0140J).